A 1025-amino-acid chain; its full sequence is MKFFALFIYRPVATILIAVAITLCGVLGFRLLPVAPLPQVDFPVIMISASLPGASPETMASSVATPLERSLGRIAGVNEMTSSSSLGSTRIILEFNFNRDINGAARDVQAAINAAQSLLPSGMPSRPTYRKANPSDAPIMILTLTSDTYSQGELYDFASTQLAQTIAQIDGVGDVDVGGSSLPAVRVGLNPEALFNQGVSLDDVRSAISNANVRKPQGAIEDSSHRWQIQTNDELKTAAEYQPLIIHYNNGAAVRLSDVASVTDSVQDVRNAGMTNAKPAILLMIRKLPEANIIQTVNSIRARLPELQETIPAAIDLQIAQDRSPTIRASLEEVEQTLVISIALVILVVFLFLRSGRATLIPAVAVPVSLIGTFAAMYLCGFSLNNLSLMALTIATGFVVDDAIVVLENISRHLEAGMKPLQASLQGTREVGFTVLSMSVSLVAVFLPLLLMGGLPGRLLREFAVTLSVAIGISLVISLTLTPMMCGWMLKRSKPHSQPRNKGFGRVLVAMQEGYGKSLKWVLNHTRIVGLVLVGTIALNVWMYITIPKTFFPEQDTGVLMGGIQADQSISFQAMRVKLQDFMKIIREDPAVDNVTGFTGGSRVNSGMMFITLKARGERNETAQQVIDRLRGKLAKEPGANLFLMAVQDIRVGGRQSNASYQYTLLSDDLAALREWEPKIRKALAAMPELADVNSDQQDNGAEMNLTYDRETMSRLGIDVAAANSLLNNAFGQRQISTIYQPMNQYKVVMEVDPRYTQDISALDKMYVINNDGKSIPLSYFASWQPANAPLSVNHQGLSAASTISFNLPTGSSLSEASDAINRTMTQLGVPSTVRGSFAGTAQVFQDTMNSQVILILAAIATVYIVLGILYESYVHPLTILSTLPSAGVGALLALELFDAPFSLIALIGIMLLIGIVKKNAIMMVDFALDAQRNGNMSPQDAIFQACILRFRPIMMTTLAALFGALPLVISSGDGSELRQPLGITIVGGLAMSQLLTLYTTPVVYLFFDRLRVRFSRKNRTTVTE.

12 consecutive transmembrane segments (helical) span residues 3-23 (FFAL…AITL), 333-353 (EVEQ…FLFL), 360-380 (LIPA…MYLC), 387-407 (LSLM…IVVL), 431-451 (VGFT…PLLL), 463-483 (FAVT…TLTP), 528-548 (IVGL…ITIP), 853-873 (VILI…LYES), 875-895 (VHPL…LLAL), 897-917 (LFDA…IGIV), 953-973 (PIMM…ISSG), and 984-1004 (ITIV…TPVV).

Belongs to the resistance-nodulation-cell division (RND) (TC 2.A.6) family. MdtC subfamily. Part of a tripartite efflux system composed of MdtA, MdtB and MdtC. MdtC forms a heteromultimer with MdtB.

The protein resides in the cell inner membrane. The chain is Multidrug resistance protein MdtC from Enterobacter sp. (strain 638).